The sequence spans 448 residues: Trigger factor (448 aa).

Positions 172-257 (GDRVTVDFVG…MKKIEWPHLP (86 aa)) constitute a PPIase FKBP-type domain.

It belongs to the FKBP-type PPIase family. Tig subfamily.

The protein localises to the cytoplasm. It carries out the reaction [protein]-peptidylproline (omega=180) = [protein]-peptidylproline (omega=0). Functionally, involved in protein export. Acts as a chaperone by maintaining the newly synthesized protein in an open conformation. Functions as a peptidyl-prolyl cis-trans isomerase. In Burkholderia cenocepacia (strain HI2424), this protein is Trigger factor.